A 116-amino-acid polypeptide reads, in one-letter code: Endoribonuclease EndoA (116 aa).

This sequence belongs to the PemK/MazF family. In terms of assembly, homodimer. Forms a complex with antitoxin EndoAI in which the toxin activity is inhibited. One dimer binds a ssRNA substrate, forms a heterohexamer composed of alternating toxin and antitoxin homodimers which inhibits the endoribonuclease activity. Antitoxin prevents RNA binding to the endoribonuclease.

Toxic component of a type II toxin-antitoxin (TA) system. Specific for 5'-UACAU-3' sequences, cleaving after the first U. Yields cleavage products with 3' phosphate and 5' hydroxyl groups. Cannot digest substrate with a UUdUACAUAA cleavage site. Overexpression is toxic for cell growth (shown in E.coli), probably by inhibiting protein synthesis through the cleavage of single-stranded RNA. The toxicity is reversed by the antitoxin EndoAI. Toxin activity cannot be inhibited by MazE from E.coli. The EndoA-EndoAI complex does not seem to bind its own promoter. The chain is Endoribonuclease EndoA from Bacillus subtilis (strain 168).